Here is a 352-residue protein sequence, read N- to C-terminus: Chorismate synthase (352 aa).

NADP(+)-binding residues include arginine 48 and arginine 54. Residues 125-127 (RSS), 238-239 (NA), glycine 278, 293-297 (KPTSS), and arginine 319 contribute to the FMN site.

The protein belongs to the chorismate synthase family. Homotetramer. Requires FMNH2 as cofactor.

The catalysed reaction is 5-O-(1-carboxyvinyl)-3-phosphoshikimate = chorismate + phosphate. Its pathway is metabolic intermediate biosynthesis; chorismate biosynthesis; chorismate from D-erythrose 4-phosphate and phosphoenolpyruvate: step 7/7. Its function is as follows. Catalyzes the anti-1,4-elimination of the C-3 phosphate and the C-6 proR hydrogen from 5-enolpyruvylshikimate-3-phosphate (EPSP) to yield chorismate, which is the branch point compound that serves as the starting substrate for the three terminal pathways of aromatic amino acid biosynthesis. This reaction introduces a second double bond into the aromatic ring system. In Bordetella petrii (strain ATCC BAA-461 / DSM 12804 / CCUG 43448), this protein is Chorismate synthase.